Here is a 448-residue protein sequence, read N- to C-terminus: UDP-N-acetylmuramoylalanine--D-glutamate ligase (448 aa).

112–118 (GSNAKST) contributes to the ATP binding site.

It belongs to the MurCDEF family.

It localises to the cytoplasm. The catalysed reaction is UDP-N-acetyl-alpha-D-muramoyl-L-alanine + D-glutamate + ATP = UDP-N-acetyl-alpha-D-muramoyl-L-alanyl-D-glutamate + ADP + phosphate + H(+). It functions in the pathway cell wall biogenesis; peptidoglycan biosynthesis. Cell wall formation. Catalyzes the addition of glutamate to the nucleotide precursor UDP-N-acetylmuramoyl-L-alanine (UMA). This chain is UDP-N-acetylmuramoylalanine--D-glutamate ligase, found in Acinetobacter baumannii (strain ACICU).